A 228-amino-acid polypeptide reads, in one-letter code: Small ribosomal subunit protein uS10m (228 aa).

The N-terminal 17 residues, 1–17 (MKRYMFGTLPRVQPKRC), are a transit peptide targeting the mitochondrion.

It belongs to the universal ribosomal protein uS10 family. Component of the mitochondrial small ribosomal subunit (mt-SSU). Mature yeast 74S mitochondrial ribosomes consist of a small (37S) and a large (54S) subunit. The 37S small subunit contains a 15S ribosomal RNA (15S mt-rRNA) and at least 32 different proteins. The 54S large subunit contains a 21S rRNA (21S mt-rRNA) and at least 45 different proteins.

Its subcellular location is the mitochondrion. Component of the mitochondrial ribosome (mitoribosome), a dedicated translation machinery responsible for the synthesis of mitochondrial genome-encoded proteins, including at least some of the essential transmembrane subunits of the mitochondrial respiratory chain. The mitoribosomes are attached to the mitochondrial inner membrane and translation products are cotranslationally integrated into the membrane. This Schizosaccharomyces pombe (strain 972 / ATCC 24843) (Fission yeast) protein is Small ribosomal subunit protein uS10m (rsm10).